The following is a 452-amino-acid chain: Exodeoxyribonuclease 7 large subunit (452 aa).

This sequence belongs to the XseA family. Heterooligomer composed of large and small subunits.

It is found in the cytoplasm. The catalysed reaction is Exonucleolytic cleavage in either 5'- to 3'- or 3'- to 5'-direction to yield nucleoside 5'-phosphates.. In terms of biological role, bidirectionally degrades single-stranded DNA into large acid-insoluble oligonucleotides, which are then degraded further into small acid-soluble oligonucleotides. The chain is Exodeoxyribonuclease 7 large subunit from Bacillus anthracis (strain A0248).